Reading from the N-terminus, the 613-residue chain is RUN domain-containing protein 1 (613 aa).

The tract at residues 15-36 (AAVGPKAKDEEEEEEEPLPPCE) is disordered. A Phosphothreonine modification is found at T54. A compositionally biased stretch (low complexity) spans 57–69 (LEEATAEEPGAAP). 3 disordered regions span residues 57-79 (LEEATAEEPGAAPGSPPDSPGRT), 140-177 (YEGPGDPASDEGDGLPGDRPWLRGEDQSEQEKQERLET), and 305-330 (GKTGNGCSRTGSSRTPPGNSKTKAED). A phosphoserine mark is found at S71 and S75. The segment covering 159 to 177 (PWLRGEDQSEQEKQERLET) has biased composition (basic and acidic residues). Residues 160–235 (WLRGEDQSEQ…IKKLDMNLNE (76 aa)) adopt a coiled-coil conformation. Residues 309–325 (NGCSRTGSSRTPPGNSK) show a composition bias toward polar residues. The RUN domain occupies 421-602 (ELTMAVRKEL…LKFSLPVDLA (182 aa)). S497 is modified (phosphoserine).

Functionally, may play a role as p53/TP53 inhibitor and thus may have oncogenic activity. In Homo sapiens (Human), this protein is RUN domain-containing protein 1 (RUNDC1).